We begin with the raw amino-acid sequence, 102 residues long: Large ribosomal subunit protein bL21 (102 aa).

Belongs to the bacterial ribosomal protein bL21 family. As to quaternary structure, part of the 50S ribosomal subunit. Contacts protein L20.

This protein binds to 23S rRNA in the presence of protein L20. This chain is Large ribosomal subunit protein bL21, found in Bacillus pumilus (strain SAFR-032).